The following is a 393-amino-acid chain: MTTQNQNTHQQTVFAMVVGEHSGDTLGAGLITSLRQTHPHAKFIGIGGPKMLALGFESLFAMDELSVMGLVEVLGRIRRLLHVRKTLTDFFITNKPDVFIGIDAPDFNIGLELKLKVKGIKTVHYVSPSVWAWREKRIFKIAKATDMVLALLPFEKAFYDKHNVPCTFVGHPLADDIPMQSDKVLARDKLGLAQDKKILALMPGSRGGELSRLLEDFFESAKQLQAQDSELLFVAPMISEQRANQFNALKAELAPDLDIEIVLNQTQQVMAASDCLLTASGTVTLEAALIKRPMVICYKFSPITFFLGRRFVKLKWFSLPNLLTNKSLVPELLQKDVCPENIVPLVKERLYQDQSQLNDSFTAIHQQLKCDASKQAAKAVLDVLSSKLLSNNK.

The protein belongs to the LpxB family.

It catalyses the reaction a lipid X + a UDP-2-N,3-O-bis[(3R)-3-hydroxyacyl]-alpha-D-glucosamine = a lipid A disaccharide + UDP + H(+). The protein operates within bacterial outer membrane biogenesis; LPS lipid A biosynthesis. Functionally, condensation of UDP-2,3-diacylglucosamine and 2,3-diacylglucosamine-1-phosphate to form lipid A disaccharide, a precursor of lipid A, a phosphorylated glycolipid that anchors the lipopolysaccharide to the outer membrane of the cell. The protein is Lipid-A-disaccharide synthase of Colwellia psychrerythraea (strain 34H / ATCC BAA-681) (Vibrio psychroerythus).